The chain runs to 947 residues: DNA topoisomerase 1 (947 aa).

The 125-residue stretch at R16 to T140 folds into the Toprim domain. Residues E22 and D109 each contribute to the Mg(2+) site. In terms of domain architecture, Topo IA-type catalytic spans D155–S614. The interaction with DNA stretch occupies residues S189 to Q194. Y343 acts as the O-(5'-phospho-DNA)-tyrosine intermediate in catalysis. Disordered regions lie at residues V733–L771, K846–N888, and A910–R947. The span at R915–A934 shows a compositional bias: basic residues.

It belongs to the type IA topoisomerase family. As to quaternary structure, monomer. Mg(2+) is required as a cofactor.

The enzyme catalyses ATP-independent breakage of single-stranded DNA, followed by passage and rejoining.. Releases the supercoiling and torsional tension of DNA, which is introduced during the DNA replication and transcription, by transiently cleaving and rejoining one strand of the DNA duplex. Introduces a single-strand break via transesterification at a target site in duplex DNA. The scissile phosphodiester is attacked by the catalytic tyrosine of the enzyme, resulting in the formation of a DNA-(5'-phosphotyrosyl)-enzyme intermediate and the expulsion of a 3'-OH DNA strand. The free DNA strand then undergoes passage around the unbroken strand, thus removing DNA supercoils. Finally, in the religation step, the DNA 3'-OH attacks the covalent intermediate to expel the active-site tyrosine and restore the DNA phosphodiester backbone. The polypeptide is DNA topoisomerase 1 (Mycobacterium leprae (strain TN)).